The sequence spans 367 residues: Deoxyhypusine synthase-like protein (367 aa).

Residues M1–P23 form a disordered region.

The protein belongs to the deoxyhypusine synthase family.

The protein is Deoxyhypusine synthase-like protein of Caulobacter vibrioides (strain ATCC 19089 / CIP 103742 / CB 15) (Caulobacter crescentus).